The sequence spans 511 residues: Potassium voltage-gated channel subfamily A member 10 (511 aa).

A disordered region spans residues 22 to 50 (IQEEPGYATDFDSTSPKGRPGGSSFSNGK). Residues 218 to 238 (VAVVSVLVVVISITIFCLETL) traverse the membrane as a helical segment. N256 carries an N-linked (GlcNAc...) asparagine glycan. The chain crosses the membrane as a helical span at residues 271–292 (FFMVESTCIVWFTFELVLRFVV). The S-palmitoyl cysteine moiety is linked to residue C293. Residues 303 to 323 (IMNIIDIISIIPYFATLITEL) form a helical membrane-spanning segment. Residue N334 is glycosylated (N-linked (GlcNAc...) asparagine). The chain crosses the membrane as a helical; Voltage-sensor span at residues 339–358 (ILRIIRLVRVFRIFKLSRHS). Residues 375 to 395 (LGLLIFFLFIGVILFSSAVYF) form a helical membrane-spanning segment. A Selectivity filter motif is present at residues 421-426 (TVGYGD). The chain crosses the membrane as a helical span at residues 436 to 456 (IVGTLCAIAGVLTIALPVPVI). Positions 489–511 (SRMGSTDSLNKTNGGCSTEKSRK) are disordered. N498 carries an N-linked (GlcNAc...) asparagine glycan.

It belongs to the potassium channel family. A (Shaker) (TC 1.A.1.2) subfamily. Kv1.8/KCNA10 sub-subfamily. As to quaternary structure, homotetramer. Interacts with KCN4B/POMP. Interaction with KCN4B/POMP is necessary for the modulation of channel activity by cAMP. Detected in kidney, in proximal tubules, glomerular endothelium, in vascular endothelium and in smooth muscle cells.

It localises to the membrane. The enzyme catalyses K(+)(in) = K(+)(out). With respect to regulation, the channel activity is up-regulated by cAMP. Functionally, voltage-gated potassium ion channel that mediates K(+) permeability of excitable membranes. When opened in response to the voltage difference across the membrane, KCNA10 channel selectively allows the flow of potassium ions across the membrane down their electrochemical gradient. The protein is Potassium voltage-gated channel subfamily A member 10 of Homo sapiens (Human).